Reading from the N-terminus, the 522-residue chain is Calcium-dependent protein kinase 14 (522 aa).

2 stretches are compositionally biased toward low complexity: residues 1 to 12 (MGNCCPPGSSSE) and 19 to 45 (SSGSSRPAGSAGAAASPATISPSAAPA). Residues 1 to 58 (MGNCCPPGSSSEPDPPPASSGSSRPAGSAGAAASPATISPSAAPAPAKPPAPIGPVLG) form a disordered region. A lipid anchor (N-myristoyl glycine) is attached at Gly-2. The 259-residue stretch at 68–326 (YTVGKELGRG…AYDVLNHPWI (259 aa)) folds into the Protein kinase domain. ATP-binding positions include 74–82 (LGRGQFGVT) and Lys-97. Asp-192 serves as the catalytic Proton acceptor. Residues 332 to 362 (APDTPLDNAVLGRLKQFRAMNQFKKAALRVI) form an autoinhibitory domain region. 4 consecutive EF-hand domains span residues 369–404 (EEIRGLKEMFKSMDSDNSGTITVDELRKGLAKKGTK), 405–440 (LTEAEVQQLMEAADADGNGTIDYEEFITATMHMNRM), 441–476 (DREEHLYTAFQYFDKDNSGYITIEELEQALREKGLM), and 480–511 (EIKDIISEVDADNDGRINYTEFVAMMRKGDPE). Ca(2+) is bound by residues Asp-382, Asp-384, Ser-386, Thr-388, Glu-393, Asp-418, Asp-420, Asn-422, Thr-424, Glu-429, Asp-454, Asp-456, Ser-458, Tyr-460, Glu-465, Asp-489, Asp-491, Asp-493, Arg-495, and Glu-500.

This sequence belongs to the protein kinase superfamily. Ser/Thr protein kinase family. CDPK subfamily.

It localises to the membrane. It carries out the reaction L-seryl-[protein] + ATP = O-phospho-L-seryl-[protein] + ADP + H(+). It catalyses the reaction L-threonyl-[protein] + ATP = O-phospho-L-threonyl-[protein] + ADP + H(+). With respect to regulation, activated by calcium. Autophosphorylation may play an important role in the regulation of the kinase activity. In terms of biological role, may play a role in signal transduction pathways that involve calcium as a second messenger. The chain is Calcium-dependent protein kinase 14 from Oryza sativa subsp. japonica (Rice).